The primary structure comprises 471 residues: 3-isopropylmalate dehydratase large subunit (471 aa).

[4Fe-4S] cluster-binding residues include C347, C409, and C412.

Belongs to the aconitase/IPM isomerase family. LeuC type 1 subfamily. In terms of assembly, heterodimer of LeuC and LeuD. [4Fe-4S] cluster is required as a cofactor.

The enzyme catalyses (2R,3S)-3-isopropylmalate = (2S)-2-isopropylmalate. It functions in the pathway amino-acid biosynthesis; L-leucine biosynthesis; L-leucine from 3-methyl-2-oxobutanoate: step 2/4. Functionally, catalyzes the isomerization between 2-isopropylmalate and 3-isopropylmalate, via the formation of 2-isopropylmaleate. The protein is 3-isopropylmalate dehydratase large subunit of Buchnera aphidicola subsp. Rhopalosiphum padi.